A 307-amino-acid polypeptide reads, in one-letter code: Ras-related protein RabR (307 aa).

The segment covering 1 to 10 has biased composition (polar residues); sequence MTTTTLLSES. The segment at 1-45 is disordered; sequence MTTTTLLSESTNNSNNTNNNTNNNTNNTMNNNNNNNNNNTIGNNN. Low complexity predominate over residues 11 to 45; sequence TNNSNNTNNNTNNNTNNTMNNNNNNNNNNTIGNNN. 61 to 68 contacts GTP; sequence GDEEVGKG. Residues 83–92 carry the Effector region motif; sequence ENLYNIEVDR. 122-126 serves as a coordination point for GTP; it reads NFHMH. The segment covering 175 to 185 has biased composition (low complexity); sequence NFNCQSNSRNS. The tract at residues 175–223 is disordered; the sequence is NFNCQSNSRNSTNYNRHSVGNHCPNSPQKGEKENNTHSSTAPPAPPPLP. Polar residues predominate over residues 186 to 202; sequence TNYNRHSVGNHCPNSPQ. Residue 230–233 coordinates GTP; it reads NKCD. Cys-304 is subject to Cysteine methyl ester. The S-geranylgeranyl cysteine moiety is linked to residue Cys-304. Positions 305–307 are cleaved as a propeptide — removed in mature form; that stretch reads NLM.

This sequence belongs to the small GTPase superfamily. Rab family.

The protein resides in the cell membrane. This chain is Ras-related protein RabR (rabR), found in Dictyostelium discoideum (Social amoeba).